We begin with the raw amino-acid sequence, 289 residues long: MTDNTVWHETLHDQFGQYFAVDNVLYHEKTDHQDLIIFENAAFGRVMALDGVVQTTERDEFIYHEMMTHVPLLAHGHAKHVLIIGGGDGAMLREVSRHKSIETITMVEIDAGVVSFCRQYLPNHNAGSYDDPRFTLVIDDGVNFVNQSHQTFDVIISDCTDPIGPGATLFTSSFYEGCKRCLNPGGIFVAQNGVCFLQQDEAIDSHRKLSHYFGDVSFYQAAIPTYYGGIMTFAWATDNDVLRHLSTEIIAARFHQTHLKCRYYNPAVHTAAFALPQYLQDALSPKEVS.

The region spanning 5–238 (TVWHETLHDQ…GIMTFAWATD (234 aa)) is the PABS domain. Gln33 is a binding site for S-methyl-5'-thioadenosine. His64 and Asp88 together coordinate spermidine. S-methyl-5'-thioadenosine-binding positions include Glu108 and 140 to 141 (DG). Asp158 (proton acceptor) is an active-site residue. 158–161 (DCTD) lines the spermidine pocket. Pro165 lines the S-methyl-5'-thioadenosine pocket.

It belongs to the spermidine/spermine synthase family. In terms of assembly, homodimer or homotetramer.

It localises to the cytoplasm. The enzyme catalyses S-adenosyl 3-(methylsulfanyl)propylamine + putrescine = S-methyl-5'-thioadenosine + spermidine + H(+). The protein operates within amine and polyamine biosynthesis; spermidine biosynthesis; spermidine from putrescine: step 1/1. Functionally, catalyzes the irreversible transfer of a propylamine group from the amino donor S-adenosylmethioninamine (decarboxy-AdoMet) to putrescine (1,4-diaminobutane) to yield spermidine. This is Polyamine aminopropyltransferase from Enterobacter sp. (strain 638).